A 175-amino-acid chain; its full sequence is Adenylate kinase isoenzyme 6 homolog (175 aa).

Residues G18, G20, K21, T22, and T23 each contribute to the ATP site. The interval C38–V61 is NMPbind. Residues S113–E123 form an LID region. Residue R114 coordinates ATP.

The protein belongs to the adenylate kinase family. AK6 subfamily. As to quaternary structure, interacts with small ribosomal subunit protein uS11. Not a structural component of 43S pre-ribosomes, but transiently interacts with them by binding to uS11.

It localises to the cytoplasm. The protein resides in the nucleus. It catalyses the reaction AMP + ATP = 2 ADP. The catalysed reaction is ATP + H2O = ADP + phosphate + H(+). In terms of biological role, broad-specificity nucleoside monophosphate (NMP) kinase that catalyzes the reversible transfer of the terminal phosphate group between nucleoside triphosphates and monophosphates. Also has ATPase activity. Involved in the late cytoplasmic maturation steps of the 40S ribosomal particles, specifically 18S rRNA maturation. While NMP activity is not required for ribosome maturation, ATPase activity is. Associates transiently with small ribosomal subunit protein uS11. ATP hydrolysis breaks the interaction with uS11. May temporarily remove uS11 from the ribosome to enable a conformational change of the ribosomal RNA that is needed for the final maturation step of the small ribosomal subunit. Its NMP activity may have a role in nuclear energy homeostasis. This is Adenylate kinase isoenzyme 6 homolog (fap7) from Schizosaccharomyces pombe (strain 972 / ATCC 24843) (Fission yeast).